Here is a 1548-residue protein sequence, read N- to C-terminus: UDP-glucose:glycoprotein glucosyltransferase (1548 aa).

The N-terminal stretch at 1–22 (MLRAVALCVSVVLIALYTPTSG) is a signal peptide. Asn-181 carries an N-linked (GlcNAc...) asparagine glycan. Over residues 243–253 (TEYKSQDDAPK) the composition is skewed to basic and acidic residues. The disordered stretch occupies residues 243-265 (TEYKSQDDAPKPEAGSTSDEDLA). Asn-266 and Asn-864 each carry an N-linked (GlcNAc...) asparagine glycan. A glucosyltransferase region spans residues 1227 to 1548 (SANQAATDED…PSHEPKHGEL (322 aa)). The segment covering 1512 to 1523 (EDHENSHSRDSA) has biased composition (basic and acidic residues). The tract at residues 1512–1548 (EDHENSHSRDSAVDDSVDDSVEVTTVTPSHEPKHGEL) is disordered. Residues 1545 to 1548 (HGEL) carry the Prevents secretion from ER motif.

It belongs to the glycosyltransferase 8 family. As to quaternary structure, monomer. May interact with CG7484/Sep15. It depends on Ca(2+) as a cofactor. Mn(2+) serves as cofactor.

The protein localises to the endoplasmic reticulum lumen. It localises to the endoplasmic reticulum-Golgi intermediate compartment. It catalyses the reaction N(4)-(alpha-D-Man-(1-&gt;2)-alpha-D-Man-(1-&gt;2)-alpha-D-Man-(1-&gt;3)-[alpha-D-Man-(1-&gt;2)-alpha-D-Man-(1-&gt;3)-[alpha-D-Man-(1-&gt;2)-alpha-D-Man-(1-&gt;6)]-alpha-D-Man-(1-&gt;6)]-beta-D-Man-(1-&gt;4)-beta-D-GlcNAc-(1-&gt;4)-beta-D-GlcNAc)-L-asparaginyl-[protein] (N-glucan mannose isomer 9A1,2,3B1,2,3) + UDP-alpha-D-glucose = N(4)-(alpha-D-Glc-(1-&gt;3)-alpha-D-Man-(1-&gt;2)-alpha-D-Man-(1-&gt;2)-alpha-D-Man-(1-&gt;3)-[alpha-D-Man-(1-&gt;2)-alpha-D-Man-(1-&gt;3)-[alpha-D-Man-(1-&gt;2)-alpha-D-Man-(1-&gt;6)]-alpha-D-Man-(1-&gt;6)]-beta-D-Man-(1-&gt;4)-beta-D-GlcNAc-(1-&gt;4)-beta-D-GlcNAc)-L-asparaginyl-[protein] + UDP + H(+). It participates in protein modification; protein glycosylation. Its function is as follows. Recognizes glycoproteins with minor folding defects. Reglucosylates single N-glycans near the misfolded part of the protein, thus providing quality control for protein folding in the endoplasmic reticulum. Reglucosylated proteins are recognized by calreticulin for recycling to the endoplasmic reticulum and refolding or degradation. The sequence is that of UDP-glucose:glycoprotein glucosyltransferase from Drosophila melanogaster (Fruit fly).